The sequence spans 468 residues: Sushi repeat-containing protein SRPX2 (468 aa).

Residues 1-25 form the signal peptide; sequence MMTSPLTQRGALSLLLLLMPAVTPT. 3 Sushi domains span residues 72–122, 123–181, and 265–324; these read ATCY…YCRQ, IRCH…VCVD, and RRCP…VCTP. 4 disulfide bridges follow: Cys74/Cys108, Cys94/Cys120, Cys125/Cys166, and Cys152/Cys179. The region spanning 180 to 264 is the HYR domain; sequence VDIDPPKIRC…SCKFIVKVQV (85 aa). 2 disulfides stabilise this stretch: Cys267/Cys309 and Cys295/Cys322.

Forms homooligomers. Interacts with PLAUR (via the UPAR/Ly6 domains), ADAMTS4 and CTSB. Interacts with HGF; the interaction increases the mitogenic activity of HGF. Contains chondroitin sulfate chains. Expressed in angiogenic endothelial cells (at protein level).

The protein resides in the secreted. Its subcellular location is the cytoplasm. It is found in the cell surface. The protein localises to the synapse. Acts as a ligand for the urokinase plasminogen activator surface receptor. Plays a role in angiogenesis by inducing endothelial cell migration and the formation of vascular network (cords). Involved in cellular migration and adhesion. Increases the phosphorylation levels of FAK. Interacts with and increases the mitogenic activity of HGF. Promotes synapse formation. Required for ultrasonic vocalizations. The polypeptide is Sushi repeat-containing protein SRPX2 (Srpx2) (Mus musculus (Mouse)).